Consider the following 130-residue polypeptide: UPF0251 protein Swol_2090 (130 aa).

It belongs to the UPF0251 family.

In Syntrophomonas wolfei subsp. wolfei (strain DSM 2245B / Goettingen), this protein is UPF0251 protein Swol_2090.